Here is a 105-residue protein sequence, read N- to C-terminus: Large ribosomal subunit protein uL24 (105 aa).

The protein belongs to the universal ribosomal protein uL24 family. Part of the 50S ribosomal subunit.

Its function is as follows. One of two assembly initiator proteins, it binds directly to the 5'-end of the 23S rRNA, where it nucleates assembly of the 50S subunit. Functionally, one of the proteins that surrounds the polypeptide exit tunnel on the outside of the subunit. This Clostridium botulinum (strain 657 / Type Ba4) protein is Large ribosomal subunit protein uL24.